The chain runs to 231 residues: 7-cyano-7-deazaguanine synthase (231 aa).

8-18 serves as a coordination point for ATP; the sequence is FSGGQDSTTCL. Zn(2+) contacts are provided by C188, C197, C200, and C203.

This sequence belongs to the QueC family. It depends on Zn(2+) as a cofactor.

It carries out the reaction 7-carboxy-7-deazaguanine + NH4(+) + ATP = 7-cyano-7-deazaguanine + ADP + phosphate + H2O + H(+). It functions in the pathway purine metabolism; 7-cyano-7-deazaguanine biosynthesis. In terms of biological role, catalyzes the ATP-dependent conversion of 7-carboxy-7-deazaguanine (CDG) to 7-cyano-7-deazaguanine (preQ(0)). The sequence is that of 7-cyano-7-deazaguanine synthase from Citrobacter koseri (strain ATCC BAA-895 / CDC 4225-83 / SGSC4696).